The chain runs to 772 residues: Serine/threonine-protein kinase tousled-like 2 (772 aa).

The disordered stretch occupies residues 24–126 (GVSKGPLNSE…SNPLPRRVEQ (103 aa)). The segment covering 29–44 (PLNSESSNQSLCSVGS) has biased composition (polar residues). The span at 46-61 (SDKEVETPEKKQNDQR) shows a compositional bias: basic and acidic residues. Phosphoserine is present on residues Ser73, Ser94, Ser99, Ser115, Ser117, and Ser134. Residues 180–208 (QNSPSSTGSGNTEHSCSSQKQISIQHRQT) form a disordered region. The interval 225-276 (NSDLEKKEGRIDDLLRANCDLRRQIDEQQKMLEKYKERLNRCVTMSKKLLIE) is required for interaction with TLK1 and DYNLL1/LC8. Coiled-coil stretches lie at residues 225 to 276 (NSDL…LLIE) and 317 to 347 (AFQN…KRKP). Residues 342-385 (LAKRKPPAMGQAPPATNEQKQRKSKTNGAENETPSSGNTELKDT) are disordered. Polar residues predominate over residues 367–380 (TNGAENETPSSGNT). The stretch at 403 to 451 (HEQEEIFKLRLGHLKKEEAEIQAELERLERVRNLHIRELKRIHNEDNSQ) forms a coiled coil. A Protein kinase domain is found at 462–741 (YLLLHLLGRG…VQQLACDPYL (280 aa)). Residues 468 to 476 (LGRGGFSEV) and Lys491 each bind ATP. Residue Asp592 is the Proton acceptor of the active site. Position 750 is a phosphoserine; by CHEK1 (Ser750).

This sequence belongs to the protein kinase superfamily. Ser/Thr protein kinase family. In terms of assembly, monomer. May form homodimers; homodimerization may enhance autophosphoylation and enzymatic activity. Heterodimer with TLK1. Interacts with YWHAZ; association with 14-3-3 proteins such as YWHAZ regulates subcellular location. May also interact with FEZ1/LZTS1 and FEZ2. Interacts with CHD7 and CHD8. Interacts with DYNLL1/LC8. Mg(2+) serves as cofactor. In terms of processing, phosphorylated at Ser-750, probably by CHEK1. Post-translationally, autophosphorylated; phosphorylation promotes the assembly of higher order oligomers and enzymatic activity. Detected in placenta, fetal liver, kidney, pancreas, heart and skeletal muscle. Highly expressed in testis. Detected in spleen, thymus, colon, ovary, small intestine, prostate and peripheral blood leukocytes. Almost undetectable in liver and lung.

Its subcellular location is the nucleus. It localises to the nucleoplasm. The protein localises to the cytoplasm. The protein resides in the perinuclear region. It is found in the cytoskeleton. The catalysed reaction is L-seryl-[protein] + ATP = O-phospho-L-seryl-[protein] + ADP + H(+). The enzyme catalyses L-threonyl-[protein] + ATP = O-phospho-L-threonyl-[protein] + ADP + H(+). Cell cycle-regulated, with maximal activity in the S-phase. Rapidly and transiently inhibited by phosphorylation following the generation of DNA double-stranded breaks during S-phase, probably by CHEK1, possibly at Ser-750. This inhibition is cell cycle checkpoint- and ATM-dependent. In terms of biological role, serine/threonine-protein kinase involved in the process of chromatin assembly and probably also DNA replication, transcription, repair, and chromosome segregation. Phosphorylates the chromatin assembly factors ASF1A and ASF1B. Phosphorylation of ASF1A prevents its proteasome-mediated degradation, thereby enhancing chromatin assembly. Negative regulator of amino acid starvation-induced autophagy. The chain is Serine/threonine-protein kinase tousled-like 2 from Homo sapiens (Human).